The following is a 695-amino-acid chain: Lupanine 17-hydroxylase [cytochrome c] (695 aa).

The signal sequence occupies residues 1-26 (MSANKNIWIIRLGVAFVCVAIGAAQA). Positions 598 to 677 (AMAESGRHIF…ALQAFILQKA (80 aa)) constitute a Cytochrome c domain. Heme c-binding residues include Cys-612, Cys-615, and His-616.

This sequence belongs to the bacterial PQQ dehydrogenase family. As to quaternary structure, monomer. It depends on pyrroloquinoline quinone as a cofactor. The cofactor is heme c.

It localises to the periplasm. It catalyses the reaction lupanine + 2 Fe(III)-[cytochrome c] + H2O = 17-hydroxylupanine + 2 Fe(II)-[cytochrome c] + 2 H(+). Its function is as follows. Catalyzes the first reaction in the catabolism of the alkaloid lupanine. It dehydrogenates lupanine, which can then be hydrated to produce 17-hydroxylupanine. This Pseudomonas sp protein is Lupanine 17-hydroxylase [cytochrome c] (luh).